A 72-amino-acid chain; its full sequence is ATP synthase subunit L (72 aa).

As to quaternary structure, F-type ATP synthases have 2 components, the catalytic core F(1) and the membrane-embedded component F(0), linked together by a central stalk and a peripheral stalk. The central stalk, also called rotor shaft, is often seen as part of F(1). The peripheral stalk is seen as part of F(0). F(0) contains the membrane channel next to the rotor. F-type ATP synthases form dimers but each monomer functions independently in ATP generation. The dimer consists of 18 different polypeptides: ATP1 (subunit alpha, part of F(1), 3 molecules per monomer), ATP2 (subunit beta, part of F(1), 3 molecules per monomer), ATP3 (subunit gamma, part of the central stalk), ATP4 (subunit b, part of the peripheral stalk), ATP5/OSCP (subunit 5/OSCP, part of the peripheral stalk), ATP6 (subunit a, part of the peripheral stalk), ATP7 (subunit d, part of the peripheral stalk), ATP8 (subunit 8, part of the peripheral stalk), OLI1 (subunit c, part of the rotor, 10 molecules per monomer), ATP14 (subunit h, part of the peripheral stalk), ATP15 (subunit epsilon, part of the central stalk), ATP16 (subunit delta, part of the central stalk), ATP17 (subunit f, part of the peripheral stalk), ATP18 (subunit i/j, part of the peripheral stalk). Dimer-specific subunits are ATP19 (subunit k, at interface between monomers), ATP20 (subunit g, at interface between monomers), TIM11 (subunit e, at interface between monomers). Also contains subunit L.

The protein resides in the mitochondrion inner membrane. In terms of biological role, mitochondrial membrane ATP synthase (F(1)F(0) ATP synthase or Complex V) produces ATP from ADP in the presence of a proton gradient across the membrane which is generated by electron transport complexes of the respiratory chain. F-type ATP synthases consist of two structural domains, F(1) - containing the extramembraneous catalytic core, and F(0) - containing the membrane proton channel, linked together by a central stalk and a peripheral stalk. During catalysis, ATP synthesis in the catalytic domain of F(1) is coupled via a rotary mechanism of the central stalk subunits to proton translocation. In Pichia angusta (Yeast), this protein is ATP synthase subunit L.